A 625-amino-acid chain; its full sequence is Threonine--tRNA ligase (625 aa).

Residues 1–147 (MRMLLIHSDY…TIVPEEAKVE (147 aa)) are editing domain. Positions 206–505 (PHVRLMLEHE…MQEGKKPMFP (300 aa)) are catalytic. Residues cysteine 298, histidine 350, and histidine 474 each coordinate Zn(2+).

The protein belongs to the class-II aminoacyl-tRNA synthetase family. As to quaternary structure, homodimer. Zn(2+) serves as cofactor.

The protein localises to the cytoplasm. The enzyme catalyses tRNA(Thr) + L-threonine + ATP = L-threonyl-tRNA(Thr) + AMP + diphosphate + H(+). Catalyzes the attachment of threonine to tRNA(Thr) in a two-step reaction: L-threonine is first activated by ATP to form Thr-AMP and then transferred to the acceptor end of tRNA(Thr). Also edits incorrectly charged L-seryl-tRNA(Thr). The polypeptide is Threonine--tRNA ligase (Pyrococcus furiosus (strain ATCC 43587 / DSM 3638 / JCM 8422 / Vc1)).